The primary structure comprises 127 residues: Modulator protein MzrA (127 aa).

The Cytoplasmic segment spans residues 1–10 (MQIPRMSLRQ). The chain crosses the membrane as a helical span at residues 11 to 31 (LAWSGAVLLLVGTLLLAWSAV). Topologically, residues 32-127 (RQQESTLAIR…RLRDNSHRFG (96 aa)) are periplasmic.

The protein belongs to the MzrA family. As to quaternary structure, interacts with EnvZ.

It localises to the cell inner membrane. In terms of biological role, modulates the activity of the EnvZ/OmpR two-component regulatory system, probably by directly modulating EnvZ enzymatic activity and increasing stability of phosphorylated OmpR. Links the two-component systems CpxA/CpxR and EnvZ/OmpR. This Escherichia coli (strain K12) protein is Modulator protein MzrA.